Consider the following 218-residue polypeptide: Ornithine decarboxylase antizyme 2 (218 aa).

This sequence belongs to the ODC antizyme family. As to quaternary structure, interacts with ODC1 and thereby sterically blocks ODC homodimerization. In terms of tissue distribution, expressed ubiquitously in 24 hours embryos, with highest levels in telencephalon, lens, retina, cerebellum and hindbrain primordia.

Its function is as follows. Ornithine decarboxylase (ODC) antizyme protein that negatively regulates ODC activity and intracellular polyamine biosynthesis and uptake in response to increased intracellular polyamine levels. Binds to ODC monomers, inhibiting the assembly of the functional ODC homodimers. Does not target the ODC monomers for degradation, which allows a protein synthesis-independent restoration of ODC activity. This is Ornithine decarboxylase antizyme 2 (oaz1b) from Danio rerio (Zebrafish).